The chain runs to 327 residues: cAMP-dependent protein kinase regulatory subunit (327 aa).

Residues 1-47 are disordered; it reads MTNNISHNQKATEKVEAQNNNNITRKRRGAISSEPLGDKPATPLPNI. A dimerization and phosphorylation region spans residues 1–65; the sequence is MTNNISHNQK…RLEQALSNNI (65 aa). The short motif at 27 to 31 is the Pseudophosphorylation motif element; the sequence is RRGAI. S32 carries the post-translational modification Phosphoserine. Residues 66–188, E136, R145, 189–327, E262, and R271 contribute to the 3',5'-cyclic AMP site; these read MFSH…EKVS and ILRH…SQKS.

This sequence belongs to the cAMP-dependent kinase regulatory chain family. In Dictyostelium the holoenzyme is a dimer composed of a regulatory (R) and a catalytic (C) subunit. In the presence of cAMP it dissociates into the active C subunit and an R monomer. In other eukaryotes the holoenzyme is a tetramer composed of 2 regulatory (R) and 2 catalytic (C) subunits. In the presence of cAMP it dissociates into active monomeric C subunits and an R dimer. In terms of processing, the pseudophosphorylation site binds to the substrate-binding region of the catalytic chain but is not phosphorylated. The physiological significance of phosphorylations by other kinases is unclear.

This Dictyostelium discoideum (Social amoeba) protein is cAMP-dependent protein kinase regulatory subunit (pkaR).